Reading from the N-terminus, the 453-residue chain is Serine/threonine-protein kinase VRK3 (453 aa).

The segment at 30–123 (EDGGTQSAVT…QSPQTLKRTR (94 aa)) is disordered. Polar residues predominate over residues 33-46 (GTQSAVTPHVSSVP). Positions 49–64 (RRDLNSSFETSPKKVK) match the Nuclear localization signal motif. Residues Ser54, Ser55, Ser59, Ser82, Ser83, and Ser108 each carry the phosphoserine modification. Residues 81–101 (DSSGSDNTLTSPDRATGTRSR) show a composition bias toward polar residues. The segment covering 109 to 123 (PLSNRQSPQTLKRTR) has biased composition (polar residues). A Protein kinase domain is found at 125–436 (TTSLQALATG…TLRNSLEALL (312 aa)).

This sequence belongs to the protein kinase superfamily. CK1 Ser/Thr protein kinase family. VRK subfamily. As to quaternary structure, interacts with DUSP3. Interacts with RAN. Interacts with HSP70/HSPA1A. In terms of processing, phosphorylated at Ser-108 by CDK5; leading to protection of the cell against H2O2-induced apoptosis. Post-translationally, ubiquitinated by RNF144A. As to expression, expressed in liver, kidney, muscle, thymus, and bone marrow. Weakly expressed in spleen.

The protein localises to the nucleus. The protein resides in the cytoplasm. It catalyses the reaction L-seryl-[protein] + ATP = O-phospho-L-seryl-[protein] + ADP + H(+). In terms of biological role, plays a role in the regulation of the cell cycle by phosphorylating the nuclear envelope protein barrier-to-autointegration factor/BAF that is required for disassembly and reassembly, respectively, of the nuclear envelope during mitosis. Under normal physiological conditions, negatively regulates ERK activity along with VHR phosphatase in the nucleus, causing timely and transient action of ERK. Stress conditions activate CDK5 which phosphorylates VRK3 to increase VHR phosphatase activity and suppress prolonged ERK activation that causes cell death. For example, upon glutamate induction, promotes nuclear localization of HSP70/HSPA1A to inhibit ERK activation via VHR phosphatase. This Mus musculus (Mouse) protein is Serine/threonine-protein kinase VRK3 (Vrk3).